A 146-amino-acid polypeptide reads, in one-letter code: Leghemoglobin 1 (146 aa).

Residues 2–146 (GFTAQQDALV…LAAAIKKAMS (145 aa)) form the Globin domain. Phosphoserine; by CCAMK occurs at positions 13 and 14. A Nitrated tyrosine modification is found at Tyr-30. Ser-45 and Ser-55 each carry phosphoserine; by CCAMK. Ser-45 serves as a coordination point for heme b. His-61 serves as a coordination point for O2. Residues Lys-64, His-93, and Lys-96 each contribute to the heme b site. Ser-123 bears the Phosphoserine; by CCAMK mark. Residue Tyr-134 is modified to Nitrated tyrosine.

It belongs to the plant globin family. As to quaternary structure, monomer. Nitrated in effective nodules and particularly in hypoxic conditions; this mechanism may play a protective role in the symbiosis by buffering toxic peroxynitrite NO(2)(-). Nitration level decrease during nodule senescence. Post-translationally, phosphorylated by CCAMK at serine residues in a Ca(2+)-dependent manner; the phosphorylation at Ser-45 disrupts the molecular environment of its porphyrin ring oxygen binding pocket, thus leading to a reduced oxygen consumption and to the delivery of oxygen O(2) to symbiosomes. As to expression, specifically and strongly expressed in root nodules and at low levels in seedlings.

It localises to the cytoplasm. It is found in the cytosol. Its subcellular location is the nucleus. Functionally, leghemoglobin that reversibly binds oxygen O(2) through a pentacoordinated heme iron. In root nodules, facilitates the diffusion of oxygen to the bacteroids while preventing the bacterial nitrogenase from being inactivated by buffering dioxygen, nitric oxide and carbon monoxide, and promoting the formation of reactive oxygen species (ROS, e.g. H(2)O(2)). This role is essential for symbiotic nitrogen fixation (SNF). The protein is Leghemoglobin 1 of Lotus japonicus (Lotus corniculatus var. japonicus).